The sequence spans 765 residues: 5-methyltetrahydropteroyltriglutamate--homocysteine methyltransferase (765 aa).

Residues Arg-18 to Lys-21 and Lys-114 each bind 5-methyltetrahydropteroyltri-L-glutamate. Residues Ile-437–Ser-439 and Glu-490 each bind L-homocysteine. L-methionine-binding positions include Ile-437–Ser-439 and Glu-490. 5-methyltetrahydropteroyltri-L-glutamate is bound at residue Trp-567. Asp-605 serves as a coordination point for L-homocysteine. Asp-605 is an L-methionine binding site. Position 611 (Glu-611) interacts with 5-methyltetrahydropteroyltri-L-glutamate. Residues His-647, Cys-649, and Glu-671 each contribute to the Zn(2+) site. Catalysis depends on His-700, which acts as the Proton donor. Cys-732 contacts Zn(2+).

This sequence belongs to the vitamin-B12 independent methionine synthase family. Zn(2+) is required as a cofactor.

The enzyme catalyses 5-methyltetrahydropteroyltri-L-glutamate + L-homocysteine = tetrahydropteroyltri-L-glutamate + L-methionine. It functions in the pathway amino-acid biosynthesis; L-methionine biosynthesis via de novo pathway; L-methionine from L-homocysteine (MetE route): step 1/1. Functionally, catalyzes the transfer of a methyl group from 5-methyltetrahydrofolate to homocysteine resulting in methionine formation. The chain is 5-methyltetrahydropteroyltriglutamate--homocysteine methyltransferase from Listeria welshimeri serovar 6b (strain ATCC 35897 / DSM 20650 / CCUG 15529 / CIP 8149 / NCTC 11857 / SLCC 5334 / V8).